We begin with the raw amino-acid sequence, 443 residues long: Pentatricopeptide repeat-containing protein 6, mitochondrial (443 aa).

A mitochondrion-targeting transit peptide spans M1–K13. 2 PPR repeats span residues N130–P164 and N220–S254.

The protein resides in the mitochondrion. In terms of biological role, mitochondrial RNA-binding protein required for the stability of the atp9 mRNA. This Schizosaccharomyces pombe (strain 972 / ATCC 24843) (Fission yeast) protein is Pentatricopeptide repeat-containing protein 6, mitochondrial (ppr6).